Consider the following 82-residue polypeptide: Small ribosomal subunit protein bS16 (82 aa).

The protein belongs to the bacterial ribosomal protein bS16 family.

This Vibrio atlanticus (strain LGP32) (Vibrio splendidus (strain Mel32)) protein is Small ribosomal subunit protein bS16.